Reading from the N-terminus, the 433-residue chain is Glutamate-1-semialdehyde 2,1-aminomutase (433 aa).

Lys273 is subject to N6-(pyridoxal phosphate)lysine.

Belongs to the class-III pyridoxal-phosphate-dependent aminotransferase family. HemL subfamily. In terms of assembly, homodimer. Requires pyridoxal 5'-phosphate as cofactor.

Its subcellular location is the cytoplasm. The catalysed reaction is (S)-4-amino-5-oxopentanoate = 5-aminolevulinate. It functions in the pathway porphyrin-containing compound metabolism; protoporphyrin-IX biosynthesis; 5-aminolevulinate from L-glutamyl-tRNA(Glu): step 2/2. It participates in porphyrin-containing compound metabolism; chlorophyll biosynthesis. This is Glutamate-1-semialdehyde 2,1-aminomutase (hemL) from Synechocystis sp. (strain ATCC 27184 / PCC 6803 / Kazusa).